The sequence spans 128 residues: Glycine cleavage system H protein (128 aa).

In terms of domain architecture, Lipoyl-binding spans 22–104; the sequence is TALVGVTDYA…YASGWLVKIK (83 aa). K63 is modified (N6-lipoyllysine).

Belongs to the GcvH family. In terms of assembly, the glycine cleavage system is composed of four proteins: P, T, L and H. (R)-lipoate serves as cofactor.

The glycine cleavage system catalyzes the degradation of glycine. The H protein shuttles the methylamine group of glycine from the P protein to the T protein. The sequence is that of Glycine cleavage system H protein from Halothermothrix orenii (strain H 168 / OCM 544 / DSM 9562).